The sequence spans 529 residues: Probable E3 ubiquitin-protein ligase MGRN1 (529 aa).

An RING-type zinc finger spans residues 275–314 (ECVVCLSDLRDTLILPCRHLCLCNACADTLRYQANNCPIC). Disordered stretches follow at residues 341 to 362 (SPVLSQSSDHTEHSNADNIPPG) and 396 to 529 (EMGD…VEEC). Polar residues-rich tracts occupy residues 449-463 (AQPQSVLPCSLSPSE) and 477-487 (NSGSESRSLGV). The segment covering 501–511 (SSLSQSESDPS) has biased composition (low complexity). The segment covering 520 to 529 (ESWSTAVEEC) has biased composition (polar residues).

In terms of processing, autoubiquitinated in vitro.

It carries out the reaction S-ubiquitinyl-[E2 ubiquitin-conjugating enzyme]-L-cysteine + [acceptor protein]-L-lysine = [E2 ubiquitin-conjugating enzyme]-L-cysteine + N(6)-ubiquitinyl-[acceptor protein]-L-lysine.. Its pathway is protein modification; protein ubiquitination. Its function is as follows. E3 ubiquitin-protein ligase. Also acts as a negative regulator of hedgehog signaling. This is Probable E3 ubiquitin-protein ligase MGRN1 (mgrn1) from Danio rerio (Zebrafish).